Consider the following 109-residue polypeptide: Phosphoribosyl-AMP cyclohydrolase (109 aa).

Aspartate 80 contacts Mg(2+). Residue cysteine 81 coordinates Zn(2+). Mg(2+) is bound by residues aspartate 82 and aspartate 84. Zn(2+) is bound by residues cysteine 97 and cysteine 104.

This sequence belongs to the PRA-CH family. As to quaternary structure, homodimer. It depends on Mg(2+) as a cofactor. The cofactor is Zn(2+).

It is found in the cytoplasm. The enzyme catalyses 1-(5-phospho-beta-D-ribosyl)-5'-AMP + H2O = 1-(5-phospho-beta-D-ribosyl)-5-[(5-phospho-beta-D-ribosylamino)methylideneamino]imidazole-4-carboxamide. Its pathway is amino-acid biosynthesis; L-histidine biosynthesis; L-histidine from 5-phospho-alpha-D-ribose 1-diphosphate: step 3/9. Functionally, catalyzes the hydrolysis of the adenine ring of phosphoribosyl-AMP. The polypeptide is Phosphoribosyl-AMP cyclohydrolase (Clostridium botulinum (strain Alaska E43 / Type E3)).